A 105-amino-acid polypeptide reads, in one-letter code: dATP/dGTP diphosphohydrolase (105 aa).

It belongs to the Caudovirales dATP/dGTP diphosphohydrolase family. Requires Co(2+) as cofactor.

It carries out the reaction dGTP + H2O = dGMP + diphosphate + H(+). The catalysed reaction is dATP + H2O = dAMP + diphosphate + H(+). It functions in the pathway purine metabolism. Catalyzes the hydrolysis of dGTP into dGMP, which is needed among other for the first step of biosynthesis of dZTP (2-amino-2'-deoxyadenosine-5'-triphosphate). This chain is dATP/dGTP diphosphohydrolase, found in Cyanophage S-2L (Cyanobacteria phage S-2L).